We begin with the raw amino-acid sequence, 567 residues long: DNA-binding protein REPIN1 (567 aa).

Residues 17-52 (PRLLSGPSQESPQTLGKESRGLRQQGTSVAQSGAQA) form a disordered region. The segment covering 22–50 (GPSQESPQTLGKESRGLRQQGTSVAQSGA) has biased composition (polar residues). Position 27 is a phosphoserine (Ser-27). Thr-30 carries the post-translational modification Phosphothreonine. Lys-33 is modified (N6-acetyllysine). The segment at 57-79 (HRCAHCRRHFPGWVALWLHTRRC) adopts a C2H2-type 1; atypical zinc-finger fold. 7 consecutive C2H2-type zinc fingers follow at residues 85 to 107 (LPCP…RQVH), 116 to 138 (FACH…LRAH), 145 to 168 (IACP…RRCH), 177 to 199 (FICG…KRVH), 236 to 258 (FQCA…RRVH), 264 to 286 (HQCP…RRIH), and 292 to 314 (YPCK…SKIH). Lys-276 is modified (N6-acetyllysine). Basic residues predominate over residues 305 to 315 (PNLLSHSKIHK). The disordered stretch occupies residues 305-372 (PNLLSHSKIH…HPQDPIEAPP (68 aa)). The segment covering 345–362 (PAVPLKPAQEPPPGAPPE) has biased composition (pro residues). 7 consecutive C2H2-type zinc fingers follow at residues 375 to 397 (YSCD…QRQH), 403 to 425 (FTCA…SRVH), 431 to 453 (FACE…RRDH), 459 to 481 (FVCP…RRIH), 487 to 509 (YVCP…RRIH), 515 to 537 (YACP…RKSH), and 543 to 565 (FCCA…QKKH).

In terms of assembly, homodimers and homomultimers. Found in a complex with RIP60 and RIP100. In terms of tissue distribution, expressed in adipose tissue and bone tissue.

It is found in the nucleus. It localises to the cytoplasm. The protein localises to the cytosol. Sequence-specific double-stranded DNA-binding protein. Binds ATT-rich and T-rich DNA sequences and facilitates DNA bending. May regulate the expression of genes involved in cellular fatty acid import, including SCARB1/CD36, and genes involved in lipid droplet formation. May regulate the expression of LCN2, and thereby influence iron metabolism and apoptosis-related pathways. May regulate the expression of genes involved in glucose transport. This chain is DNA-binding protein REPIN1 (REPIN1), found in Homo sapiens (Human).